Reading from the N-terminus, the 1119-residue chain is DISARM protein DrmA (1119 aa).

Positions 73–95 (PESGMEEDVEQQRNSELEQEAEE) are disordered. The 174-residue stretch at 813–986 (ELSKYIDPYR…ATPYASRARD (174 aa)) folds into the Helicase C-terminal domain.

The protein belongs to the helicase family.

It is found in the cytoplasm. Component of antiviral defense system DISARM (defense island system associated with restriction-modification), composed of DrmE, DrmA, DrmB, DrmC and DrmMII. DISARM is probably a multi-gene restriction module, this subunit is probably a helicase. Expression of DISARM in B.subtilis (strain BEST7003) confers resistance to phages Nf, phi29, phi105, phi3T, SPO1, SPR and SPP1. Protection is over 10(7)-fold against phi3T, 10(4)-10(5)-fold against Nf, phi29, phi105 and SPR, 100-fold against SPO1 and 10-fold against SPP1. DISARM does not interfere with phage adsorption, but instead interferes with (phi3T) DNA replication early in its cycle, preventing replication, circularization and lysogeny and probably causes phage DNA degradation (DNA is degraded in SPP1-infected cells). In Bacillus paralicheniformis (strain ATCC 9945a / NCIMB 11709 / CD-2), this protein is DISARM protein DrmA.